The primary structure comprises 83 residues: ATP synthase subunit c 2 (83 aa).

2 helical membrane-spanning segments follow: residues 8–28 (IASILGAAFAVGIGSLGPALG) and 58–78 (LAMIETMAIYCLVIALLLLFA).

It belongs to the ATPase C chain family. In terms of assembly, F-type ATPases have 2 components, F(1) - the catalytic core - and F(0) - the membrane proton channel. F(1) has five subunits: alpha(3), beta(3), gamma(1), delta(1), epsilon(1). F(0) has four main subunits: a(1), b(1), b'(1) and c(10-14). The alpha and beta chains form an alternating ring which encloses part of the gamma chain. F(1) is attached to F(0) by a central stalk formed by the gamma and epsilon chains, while a peripheral stalk is formed by the delta, b and b' chains.

The protein localises to the cell inner membrane. Functionally, f(1)F(0) ATP synthase produces ATP from ADP in the presence of a proton or sodium gradient. F-type ATPases consist of two structural domains, F(1) containing the extramembraneous catalytic core and F(0) containing the membrane proton channel, linked together by a central stalk and a peripheral stalk. During catalysis, ATP synthesis in the catalytic domain of F(1) is coupled via a rotary mechanism of the central stalk subunits to proton translocation. Its function is as follows. Key component of the F(0) channel; it plays a direct role in translocation across the membrane. A homomeric c-ring of between 10-14 subunits forms the central stalk rotor element with the F(1) delta and epsilon subunits. In Cereibacter sphaeroides (strain ATCC 17029 / ATH 2.4.9) (Rhodobacter sphaeroides), this protein is ATP synthase subunit c 2.